Reading from the N-terminus, the 375-residue chain is POU domain, class 3, transcription factor 1-A (375 aa).

3 disordered regions span residues 1 to 29, 67 to 138, and 151 to 200; these read MAAT…RMHQ, PASD…HQPL, and MLGP…PSSD. Composition is skewed to polar residues over residues 107–117, 129–138, and 151–160; these read VHQQSPSSHAW, SPSSNSHQPL, and MLGPQASSLH. The segment covering 162–177 has biased composition (basic and acidic residues); it reads SMRDPLHDDPGVHDTQ. Residues 194-268 form the POU-specific domain; it reads EDAPSSDDLE…LLNKWLEETD (75 aa). A DNA-binding region (homeobox) is located at residues 286–345; sequence KRKKRTSIEVGVKGALENHFLKCPKPSAHEITSLADSLQLEKEVVRVWFCNRRQKEKRMT.

This sequence belongs to the POU transcription factor family. Class-3 subfamily. In embryos at the neural fold stage, localized primarily in the anterior neural plate, and localized mostly in the anterior region of the nerve cord of neurula stage embryos. In tailbud stages, expressed predominantly in the eye and brain, with weak expression along the length of the nerve cord. In adults, expressed in skin and brain.

The protein resides in the nucleus. Functionally, acts as a transcription factor. May play a role in neuronal differentiation. This is POU domain, class 3, transcription factor 1-A (pou3f1-a) from Xenopus laevis (African clawed frog).